The sequence spans 62 residues: Sperm protamine P1 (62 aa).

A disordered region spans residues 1–62; the sequence is MARYRRHSRS…RYSRRGRRRY (62 aa).

This sequence belongs to the protamine P1 family. As to expression, testis.

It is found in the nucleus. It localises to the chromosome. Protamines substitute for histones in the chromatin of sperm during the haploid phase of spermatogenesis. They compact sperm DNA into a highly condensed, stable and inactive complex. This chain is Sperm protamine P1 (PRM1), found in Antechinomys laniger (Eastern jerboa marsupial).